The sequence spans 149 residues: Transcriptional repressor NrdR (149 aa).

Residues 3-34 (CPFCSATDTKVIDSRLVADGHQVRRRRECAEC) fold into a zinc finger. In terms of domain architecture, ATP-cone spans 49–139 (PRVVKQDGSR…VYRAFEDVSE (91 aa)).

This sequence belongs to the NrdR family. It depends on Zn(2+) as a cofactor.

Its function is as follows. Negatively regulates transcription of bacterial ribonucleotide reductase nrd genes and operons by binding to NrdR-boxes. In Shewanella sediminis (strain HAW-EB3), this protein is Transcriptional repressor NrdR.